Reading from the N-terminus, the 545-residue chain is Chaperonin GroEL (545 aa).

Residues 30-33 (TLGP), Lys51, 87-91 (DGTTT), Gly415, and Asp496 contribute to the ATP site.

This sequence belongs to the chaperonin (HSP60) family. In terms of assembly, forms a cylinder of 14 subunits composed of two heptameric rings stacked back-to-back. Interacts with the co-chaperonin GroES.

The protein resides in the cytoplasm. It carries out the reaction ATP + H2O + a folded polypeptide = ADP + phosphate + an unfolded polypeptide.. In terms of biological role, together with its co-chaperonin GroES, plays an essential role in assisting protein folding. The GroEL-GroES system forms a nano-cage that allows encapsulation of the non-native substrate proteins and provides a physical environment optimized to promote and accelerate protein folding. The polypeptide is Chaperonin GroEL (Rhodobacter capsulatus (Rhodopseudomonas capsulata)).